The primary structure comprises 203 residues: Cytochrome c biogenesis ATP-binding export protein CcmA (203 aa).

Positions 2 to 203 (LEALDLAGVR…KTSQTVRMGA (202 aa)) constitute an ABC transporter domain. 34–41 (GENGSGKT) serves as a coordination point for ATP.

It belongs to the ABC transporter superfamily. CcmA exporter (TC 3.A.1.107) family. As to quaternary structure, the complex is composed of two ATP-binding proteins (CcmA) and two transmembrane proteins (CcmB).

The protein localises to the cell inner membrane. It carries out the reaction heme b(in) + ATP + H2O = heme b(out) + ADP + phosphate + H(+). In terms of biological role, part of the ABC transporter complex CcmAB involved in the biogenesis of c-type cytochromes; once thought to export heme, this seems not to be the case, but its exact role is uncertain. Responsible for energy coupling to the transport system. The protein is Cytochrome c biogenesis ATP-binding export protein CcmA of Pseudomonas aeruginosa.